Here is a 301-residue protein sequence, read N- to C-terminus: Acetylglutamate kinase (301 aa).

Substrate-binding positions include 72 to 73 (GG), R94, and N199.

This sequence belongs to the acetylglutamate kinase family. ArgB subfamily.

The protein resides in the cytoplasm. The catalysed reaction is N-acetyl-L-glutamate + ATP = N-acetyl-L-glutamyl 5-phosphate + ADP. Its pathway is amino-acid biosynthesis; L-arginine biosynthesis; N(2)-acetyl-L-ornithine from L-glutamate: step 2/4. Functionally, catalyzes the ATP-dependent phosphorylation of N-acetyl-L-glutamate. This is Acetylglutamate kinase from Bartonella bacilliformis (strain ATCC 35685 / KC583 / Herrer 020/F12,63).